A 417-amino-acid chain; its full sequence is Serine/threonine-protein phosphatase 4 regulatory subunit 2 (417 aa).

Composition is skewed to polar residues over residues 140-149, 158-170, and 186-196; these read EKNNSNSLNR, NSPS…NING, and APMTTNGLPES. The interval 140 to 417 is disordered; that stretch reads EKNNSNSLNR…EVTDEPMEQD (278 aa). Phosphoserine is present on Ser-159. The segment covering 197 to 213 has biased composition (basic and acidic residues); that stretch reads TDSKEANLQQNEEKNHS. Residues 214 to 226 are compositionally biased toward low complexity; sequence DSSTSESEVSSVS. Ser-226 carries the post-translational modification Phosphoserine. Residues 231–258 show a composition bias toward basic and acidic residues; sequence KHPDEDAVEAEGHEVKRLRFDKEGEVRE. Over residues 259–269 the composition is skewed to polar residues; the sequence is TASQTTSSEIS. Residues 283–297 show a composition bias toward basic and acidic residues; that stretch reads QDKDKDSRCTRQHCT. The span at 298–311 shows a compositional bias: acidic residues; that stretch reads EEDEEEDEEEEEES. Basic and acidic residues predominate over residues 318-327; it reads MIPERKNQEK. Positions 338 to 350 are enriched in acidic residues; the sequence is ETSEENNQMEESD. Positions 353-363 are enriched in basic and acidic residues; it reads QAEKDLLHSEG. Over residues 366 to 375 the composition is skewed to low complexity; sequence NEGPVSSSSS. Over residues 385–399 the composition is skewed to polar residues; it reads GSNSSKTGEILSESS. The segment covering 400 to 417 has biased composition (acidic residues); that stretch reads MENDDEATEVTDEPMEQD.

The protein belongs to the PPP4R2 family. As to quaternary structure, serine/threonine-protein phosphatase 4 (PP4) occurs in different assemblies of the catalytic and one or more regulatory subunits. Component of the PP4 complexes PPP4C-PPP4R2, PPP4C-PPP4R2-PPP4R3A and PPP4C-PPP4R2-PPP4R3B. The PPP4C-PPP4R2 complex appears to be a tetramer composed of 2 molecules of PPP4C and 2 molecules of PPP4R2. Interacts with DDX20/GEMIN3 and GEMIN4. Interacts with RPA2; this DNA damage-dependent interaction recruits PPP4C leading to RPA2 dephosphorylation. In terms of tissue distribution, widely expressed.

It is found in the cytoplasm. It localises to the cytoskeleton. Its subcellular location is the microtubule organizing center. The protein localises to the centrosome. The protein resides in the nucleus. Functionally, regulatory subunit of serine/threonine-protein phosphatase 4 (PP4). May regulate the activity of PPP4C at centrosomal microtubule organizing centers. Its interaction with the SMN complex leads to enhance the temporal localization of snRNPs, suggesting a role of PPP4C in maturation of spliceosomal snRNPs. The PPP4C-PPP4R2-PPP4R3A PP4 complex specifically dephosphorylates H2AX phosphorylated on 'Ser-140' (gamma-H2AX) generated during DNA replication and required for DNA double strand break repair. Mediates RPA2 dephosphorylation by recruiting PPP4C to RPA2 in a DNA damage-dependent manner. RPA2 dephosphorylation is required for the efficient RPA2-mediated recruitment of RAD51 to chromatin following double strand breaks, an essential step for DNA repair. This is Serine/threonine-protein phosphatase 4 regulatory subunit 2 (PPP4R2) from Homo sapiens (Human).